The following is a 513-amino-acid chain: PPE family protein PPE4 (513 aa).

3 helical membrane passes run 233–253 (IIIA…PLLF), 277–297 (FLLP…PIVL), and 309–329 (LAAA…AVTG). Disordered stretches follow at residues 395–446 (AAAA…ERGA) and 469–513 (LAGD…HDSK).

This sequence belongs to the mycobacterial PPE family.

The protein resides in the cell membrane. Functionally, important for the siderophore-mediated iron-acquisition function of ESX-3. This is PPE family protein PPE4 (PPE4) from Mycobacterium tuberculosis (strain CDC 1551 / Oshkosh).